Consider the following 553-residue polypeptide: Methionine--tRNA ligase (553 aa).

Residues 12 to 22 (PYANSQLHLGH) carry the 'HIGH' region motif. Positions 144, 147, 157, and 160 each coordinate Zn(2+). A 'KMSKS' region motif is present at residues 332–336 (KFSKS). Lysine 335 contributes to the ATP binding site.

This sequence belongs to the class-I aminoacyl-tRNA synthetase family. MetG type 1 subfamily. In terms of assembly, monomer. Zn(2+) serves as cofactor.

The protein resides in the cytoplasm. The enzyme catalyses tRNA(Met) + L-methionine + ATP = L-methionyl-tRNA(Met) + AMP + diphosphate. Its function is as follows. Is required not only for elongation of protein synthesis but also for the initiation of all mRNA translation through initiator tRNA(fMet) aminoacylation. In Dehalococcoides mccartyi (strain ATCC BAA-2266 / KCTC 15142 / 195) (Dehalococcoides ethenogenes (strain 195)), this protein is Methionine--tRNA ligase.